Consider the following 367-residue polypeptide: Alanine racemase (367 aa).

Lys40 (proton acceptor; specific for D-alanine) is an active-site residue. Lys40 is subject to N6-(pyridoxal phosphate)lysine. Residue Arg136 coordinates substrate. Catalysis depends on Tyr263, which acts as the Proton acceptor; specific for L-alanine. Met310 is a substrate binding site.

Belongs to the alanine racemase family. Requires pyridoxal 5'-phosphate as cofactor.

It catalyses the reaction L-alanine = D-alanine. It participates in amino-acid biosynthesis; D-alanine biosynthesis; D-alanine from L-alanine: step 1/1. In terms of biological role, catalyzes the interconversion of L-alanine and D-alanine. May also act on other amino acids. The chain is Alanine racemase (alr) from Streptococcus suis (strain 98HAH33).